A 150-amino-acid chain; its full sequence is MSDKFHILLLNGPNLNLLGTREPEKYGYTTLTEIVSQLEAQAQGMDVVLSHLQSNAEHVLIDRIHQARGNTDFILINPAAFTHTSVALRDALLGVQIPFIEIHLSNVHAREPFRHHSYLSDIAVGVICGLGADGYNFALQAAVNRLSKSN.

The active-site Proton acceptor is the tyrosine 26. 3 residues coordinate substrate: asparagine 77, histidine 83, and aspartate 90. The Proton donor role is filled by histidine 103. Substrate is bound by residues 104 to 105 (LS) and arginine 114.

This sequence belongs to the type-II 3-dehydroquinase family. As to quaternary structure, homododecamer.

It carries out the reaction 3-dehydroquinate = 3-dehydroshikimate + H2O. Its pathway is metabolic intermediate biosynthesis; chorismate biosynthesis; chorismate from D-erythrose 4-phosphate and phosphoenolpyruvate: step 3/7. Its function is as follows. Catalyzes a trans-dehydration via an enolate intermediate. The protein is 3-dehydroquinate dehydratase of Yersinia enterocolitica serotype O:8 / biotype 1B (strain NCTC 13174 / 8081).